The chain runs to 162 residues: uncharacterized protein (162 aa).

An N-terminal signal peptide occupies residues 1-21 (MRLCGLLIFLSYIVYVDNAVT).

This is an uncharacterized protein from Caenorhabditis elegans.